The primary structure comprises 85 residues: MCVSRLVLLFGLLLCVGAQLSNAQHWSHGWYPGGKRELDSFGTSEISEEIKLCEAGECSYLRPQRRNVLRNIILDALARELQKRK.

The first 23 residues, 1–23, serve as a signal peptide directing secretion; that stretch reads MCVSRLVLLFGLLLCVGAQLSNA. Gln24 carries the post-translational modification Pyrrolidone carboxylic acid. Gly33 is subject to Glycine amide.

It belongs to the GnRH family.

It localises to the secreted. Functionally, stimulates the secretion of gonadotropins. The polypeptide is Progonadoliberin-2 (gnrh2) (Morone saxatilis (Striped bass)).